We begin with the raw amino-acid sequence, 130 residues long: Zinc finger A20 and AN1 domain-containing stress-associated protein 10 (130 aa).

An A20-type zinc finger spans residues 4 to 38; the sequence is ETEALPCEGGCGLYGTRVNNNLCSLCYKKSVLQHS. 12 residues coordinate Zn(2+): Cys-10, Cys-14, Cys-26, Cys-29, Cys-71, Cys-74, Cys-85, Cys-87, Cys-92, His-95, His-101, and Cys-103. An AN1-type zinc finger spans residues 65-111; sequence PVKKRRCGICKRKVGMLGFKCRCGHMFCGSHRYPEEHSCPFDYKQSG.

Functionally, may be involved in environmental stress response. This is Zinc finger A20 and AN1 domain-containing stress-associated protein 10 (SAP10) from Arabidopsis thaliana (Mouse-ear cress).